The following is a 1018-amino-acid chain: Transmembrane protein 132A (1018 aa).

A signal peptide spans 1–32 (MTERKAAAPRGPYGAWFCLLVALALEVVRVSS). Residues 33–846 (NHDTLDPIYL…VTDLELGMYA (814 aa)) lie on the Extracellular side of the membrane. Asn-276 is a glycosylation site (N-linked (GlcNAc...) asparagine). The interval 606 to 911 (IEVRSPLSDA…QLDRCSSSGP (306 aa)) is binds to HSPA5/GRP78. Residues 666-1018 (LPAPKQEVAL…NYMERIRGSS (353 aa)) are confers cellular localization similar to full-length form. The segment covering 807–818 (ERAEEEAGKEEN) has biased composition (basic and acidic residues). Positions 807–833 (ERAEEEAGKEENEAKEEEEDEEEMVPA) are disordered. Over residues 819–830 (EAKEEEEDEEEM) the composition is skewed to acidic residues. The chain crosses the membrane as a helical span at residues 847 to 867 (LLGIFCLAILIFLVNGVVFVL). Residues 868–1018 (RYQRKEPPDS…NYMERIRGSS (151 aa)) are Cytoplasmic-facing. A disordered region spans residues 900–956 (SRQLDRCSSSGPPKGEGGCPCESGAGGDASTVAPSASESPAGSSSTLARKEAGGRRK). Composition is skewed to low complexity over residues 906–922 (CSSSGPPKGEGGCPCES) and 932–944 (APSASESPAGSSS).

Belongs to the TMEM132 family. Interacts with HSPA5/GRP78.

It is found in the golgi apparatus membrane. It localises to the endoplasmic reticulum membrane. Functionally, may play a role in embryonic and postnatal development of the brain. Increased resistance to cell death induced by serum starvation in cultured cells. Regulates cAMP-induced GFAP gene expression via STAT3 phosphorylation. In Mus musculus (Mouse), this protein is Transmembrane protein 132A (Tmem132a).